A 907-amino-acid polypeptide reads, in one-letter code: MLASLIGGIFGTKNERELKRMRKIVEQINALEPTISALSDADLSAKTPEFKQRYNNGESLDKLLPEAFAVCREAAKRVMGMRHYDVQLIGGITLHEGKIAEMRTGEGKTLMGTLACYLNALSGEGVHVITVNDYLAQRDAELNRPLFEFLGLSIGTIYSMQEPAEKAAAYLADITYGTNNEFGFDYLRDNMVFSLAEKKQRGLHYAIIDEVDSILIDEARTPLIISGQSEDSSHLYTAINTIPPKLRPQKEEKVADGGHFWIDEKQRSVEMTEIGYETVEQELIQMGLLAEGESLYSATNLNLVHHVSAAIRAHFLFQRDVHYIIHDGEVVIVDEHTGRTMPGRRWSEGLHQAVEAKEGLAIQPENQTLATTTFQNYFRLYKKLSGMTGTADTEAAEMKEIYGLDVVIIPTHRPMIRNDQNDLIYLNRNGKYNAIIQEIMNIRQQGVAPILIGTATIEASEILSSKLKQAGIHHEVLNAKQHEREADIIAQAGSPNAVTIATNMAGRGTDIILGGNWKAKLAKLENPTPEDEARLKAQWEQDHEDVLQAGGLHIIGSERHESRRIDNQLRGRAGRQGDPGVSRFYLSLEDDLMRIFAGDRVVAMMRAMGLKEDEAIEHKMVSRSIENAQRKVEARNFDIRKNLLKYDDVNNEQRKIIYSQRDEILAENTLQEYVEEMHREVMQAMIANFIPPESIHDQWDVEGLENALRIDLGIELPVQEWLEQDRRLDEEGLVERISDEVIARYRQRRAQMGDESAAMLERHFVLNSLDRHWKDHLAAMDYLRQGIHLRGYAQKNPEQEYKKEAFNLFVNMLGVIKTDVVTDLSRVHIPTPEELAEMEAQQQQQAEAMKLSFEHDDVDGLTGEVTASQEALNDSATEQQTFPVPESRNAPCPCGSGLKYKQCHGKI.

Residues Gln87, 105 to 109 (GEGKT), and Asp510 each bind ATP. Zn(2+) contacts are provided by Cys892, Cys894, Cys903, and His904.

The protein belongs to the SecA family. As to quaternary structure, monomer and homodimer. Part of the essential Sec protein translocation apparatus which comprises SecA, SecYEG and auxiliary proteins SecDF-YajC and YidC. Zn(2+) serves as cofactor.

It is found in the cell inner membrane. The protein localises to the cytoplasm. The catalysed reaction is ATP + H2O + cellular proteinSide 1 = ADP + phosphate + cellular proteinSide 2.. Its function is as follows. Part of the Sec protein translocase complex. Interacts with the SecYEG preprotein conducting channel. Has a central role in coupling the hydrolysis of ATP to the transfer of proteins into and across the cell membrane, serving both as a receptor for the preprotein-SecB complex and as an ATP-driven molecular motor driving the stepwise translocation of polypeptide chains across the membrane. The chain is Protein translocase subunit SecA from Acinetobacter baumannii (strain ACICU).